Here is a 25-residue protein sequence, read N- to C-terminus: Grammistin Pp 3 (25 aa).

The protein belongs to the grammistin family. Group 3 subfamily. As to quaternary structure, exists as aggregates of 3-4 molecules. Expressed by the skin glands.

It localises to the secreted. Its function is as follows. Thanks to its abundant amphiphilic alpha-helices, it may integrate into membrane phospholipids, leading to lysis of the membrane. Has hemolytic activity. Has antibacterial activity with a broad spectrum against various species of bacteria including both Gram-positive and Gram-negative groups. Also has ichthyotoxic activity. The polypeptide is Grammistin Pp 3 (Pogonoperca punctata (Clown grouper)).